Here is a 493-residue protein sequence, read N- to C-terminus: Glutamate--tRNA ligase (493 aa).

The 'HIGH' region motif lies at 10–20; that stretch reads PSPTGDPHVGT. Zn(2+) contacts are provided by cysteine 107, cysteine 109, cysteine 134, and histidine 136. Positions 251–255 match the 'KMSKS' region motif; sequence KLSKR. ATP is bound at residue lysine 254.

This sequence belongs to the class-I aminoacyl-tRNA synthetase family. Glutamate--tRNA ligase type 1 subfamily. As to quaternary structure, monomer. The cofactor is Zn(2+).

The protein resides in the cytoplasm. The enzyme catalyses tRNA(Glu) + L-glutamate + ATP = L-glutamyl-tRNA(Glu) + AMP + diphosphate. Functionally, catalyzes the attachment of glutamate to tRNA(Glu) in a two-step reaction: glutamate is first activated by ATP to form Glu-AMP and then transferred to the acceptor end of tRNA(Glu). This Ectopseudomonas mendocina (strain ymp) (Pseudomonas mendocina) protein is Glutamate--tRNA ligase.